We begin with the raw amino-acid sequence, 195 residues long: ATP-dependent Clp protease proteolytic subunit (195 aa).

Ser-98 serves as the catalytic Nucleophile. The active site involves His-123.

Belongs to the peptidase S14 family. In terms of assembly, fourteen ClpP subunits assemble into 2 heptameric rings which stack back to back to give a disk-like structure with a central cavity, resembling the structure of eukaryotic proteasomes.

The protein localises to the cytoplasm. The catalysed reaction is Hydrolysis of proteins to small peptides in the presence of ATP and magnesium. alpha-casein is the usual test substrate. In the absence of ATP, only oligopeptides shorter than five residues are hydrolyzed (such as succinyl-Leu-Tyr-|-NHMec, and Leu-Tyr-Leu-|-Tyr-Trp, in which cleavage of the -Tyr-|-Leu- and -Tyr-|-Trp bonds also occurs).. Functionally, cleaves peptides in various proteins in a process that requires ATP hydrolysis. Has a chymotrypsin-like activity. Plays a major role in the degradation of misfolded proteins. In Helicobacter pylori (strain G27), this protein is ATP-dependent Clp protease proteolytic subunit.